A 645-amino-acid chain; its full sequence is Chaperone protein DnaK (645 aa).

Residue threonine 201 is modified to Phosphothreonine; by autocatalysis. The segment covering 606 to 629 has biased composition (low complexity); the sequence is NTNNATAGDNNTTDTGSSSNSDGS. The segment at 606 to 645 is disordered; sequence NTNNATAGDNNTTDTGSSSNSDGSKVVDSDYQEIDKKDGK. Over residues 630–645 the composition is skewed to basic and acidic residues; sequence KVVDSDYQEIDKKDGK.

Belongs to the heat shock protein 70 family.

Its function is as follows. Acts as a chaperone. This is Chaperone protein DnaK from Ehrlichia ruminantium (strain Welgevonden).